A 201-amino-acid polypeptide reads, in one-letter code: Recombination protein RecR (201 aa).

The C4-type zinc finger occupies 60-75; that stretch reads CQVCGNVDVRDPCTVC. Positions 83-178 constitute a Toprim domain; the sequence is SVLVVVAEVA…KVTRLAHGVP (96 aa).

It belongs to the RecR family.

Its function is as follows. May play a role in DNA repair. It seems to be involved in an RecBC-independent recombinational process of DNA repair. It may act with RecF and RecO. The sequence is that of Recombination protein RecR from Azorhizobium caulinodans (strain ATCC 43989 / DSM 5975 / JCM 20966 / LMG 6465 / NBRC 14845 / NCIMB 13405 / ORS 571).